The sequence spans 105 residues: Nucleoid-associated protein Ccur92_18190 (105 aa).

The protein belongs to the YbaB/EbfC family. Homodimer.

The protein localises to the cytoplasm. Its subcellular location is the nucleoid. Its function is as follows. Binds to DNA and alters its conformation. May be involved in regulation of gene expression, nucleoid organization and DNA protection. The chain is Nucleoid-associated protein Ccur92_18190 from Campylobacter curvus (strain 525.92).